The following is a 147-amino-acid chain: Bis(5'-nucleosyl)-tetraphosphatase [asymmetrical] (147 aa).

An N-acetylalanine modification is found at Ala-2. Residues 2 to 139 (ALRACGLIIF…EMKATLQEGH (138 aa)) enclose the Nudix hydrolase domain. Positions 43–64 (GHVDPGENDLETALRETQEETG) match the Nudix box motif.

It belongs to the Nudix hydrolase family. Requires a divalent metal cation as cofactor.

The enzyme catalyses P(1),P(4)-bis(5'-guanosyl) tetraphosphate + H2O = GMP + GTP + 2 H(+). It carries out the reaction a 5'-end CoA-ribonucleoside in mRNA + H2O = a 5'-end phospho-adenosine-phospho-ribonucleoside in mRNA + (R)-4'-phosphopantetheine + 2 H(+). It catalyses the reaction a 5'-end FAD-phospho-ribonucleoside in mRNA + H2O = a 5'-end phospho-adenosine-phospho-ribonucleoside in mRNA + FMN + 2 H(+). Its function is as follows. Catalyzes the asymmetric hydrolysis of diadenosine 5',5'''-P1,P4-tetraphosphate (Ap4A) to yield AMP and ATP. Exhibits decapping activity towards FAD-capped RNAs and dpCoA-capped RNAs in vitro. This chain is Bis(5'-nucleosyl)-tetraphosphatase [asymmetrical] (Nudt2), found in Rattus norvegicus (Rat).